The chain runs to 372 residues: NAD(P)H-quinone oxidoreductase subunit 1 (372 aa).

A run of 8 helical transmembrane segments spans residues 27–47 (AVWM…GVLI), 97–117 (ALFT…YLIV), 128–148 (LGIG…GLLM), 166–186 (AAQS…IAMM), 204–224 (ILGW…IAAL), 254–274 (FALF…MVAI), 308–328 (AVGI…AILL), and 351–371 (VGLV…IAFG).

It belongs to the complex I subunit 1 family. In terms of assembly, NDH-1 is composed of at least 11 different subunits.

The protein resides in the cellular thylakoid membrane. The catalysed reaction is a plastoquinone + NADH + (n+1) H(+)(in) = a plastoquinol + NAD(+) + n H(+)(out). The enzyme catalyses a plastoquinone + NADPH + (n+1) H(+)(in) = a plastoquinol + NADP(+) + n H(+)(out). Its function is as follows. NDH-1 shuttles electrons from an unknown electron donor, via FMN and iron-sulfur (Fe-S) centers, to quinones in the respiratory and/or the photosynthetic chain. The immediate electron acceptor for the enzyme in this species is believed to be plastoquinone. Couples the redox reaction to proton translocation, and thus conserves the redox energy in a proton gradient. This Cyanothece sp. (strain PCC 7425 / ATCC 29141) protein is NAD(P)H-quinone oxidoreductase subunit 1.